Reading from the N-terminus, the 100-residue chain is Urease subunit gamma (100 aa).

It belongs to the urease gamma subunit family. As to quaternary structure, heterotrimer of UreA (gamma), UreB (beta) and UreC (alpha) subunits. Three heterotrimers associate to form the active enzyme.

The protein localises to the cytoplasm. The catalysed reaction is urea + 2 H2O + H(+) = hydrogencarbonate + 2 NH4(+). The protein operates within nitrogen metabolism; urea degradation; CO(2) and NH(3) from urea (urease route): step 1/1. In terms of biological role, ureolysis may allow urea to be employed as a nitrogen source for growth and produces ammonia which may protect from killing at low pH. This is Urease subunit gamma from Streptococcus salivarius (strain 57.I).